A 107-amino-acid chain; its full sequence is Inner membrane protein YiaW (107 aa).

Over 1–6 (MFLDYF) the chain is Cytoplasmic. The helical transmembrane segment at 7 to 29 (ALGVLIFVFLVIFYGIIILHDIP) threads the bilayer. Over 30–43 (YLIAKKRNHPHADA) the chain is Periplasmic. The helical transmembrane segment at 44–66 (IHVAGWVSLFTLHVIWPFLWIWA) threads the bilayer. At 67-107 (TLYRPERGWGMQSHDSSVMQLQQRIAGLEKQLADIKSSSAE) the chain is on the cytoplasmic side.

To E.coli YibI.

It localises to the cell inner membrane. This Escherichia coli O157:H7 protein is Inner membrane protein YiaW (yiaW).